The sequence spans 135 residues: ATP synthase epsilon chain (135 aa).

The protein belongs to the ATPase epsilon chain family. In terms of assembly, F-type ATPases have 2 components, CF(1) - the catalytic core - and CF(0) - the membrane proton channel. CF(1) has five subunits: alpha(3), beta(3), gamma(1), delta(1), epsilon(1). CF(0) has three main subunits: a, b and c.

It localises to the cell inner membrane. In terms of biological role, produces ATP from ADP in the presence of a proton gradient across the membrane. The polypeptide is ATP synthase epsilon chain (Rhizobium etli (strain CIAT 652)).